The primary structure comprises 300 residues: Ribosomal RNA small subunit methyltransferase H (300 aa).

S-adenosyl-L-methionine-binding positions include 33–35 (GGH), D53, F78, D97, and Q104.

The protein belongs to the methyltransferase superfamily. RsmH family.

It is found in the cytoplasm. It catalyses the reaction cytidine(1402) in 16S rRNA + S-adenosyl-L-methionine = N(4)-methylcytidine(1402) in 16S rRNA + S-adenosyl-L-homocysteine + H(+). In terms of biological role, specifically methylates the N4 position of cytidine in position 1402 (C1402) of 16S rRNA. The sequence is that of Ribosomal RNA small subunit methyltransferase H from Karelsulcia muelleri (strain GWSS) (Sulcia muelleri).